We begin with the raw amino-acid sequence, 319 residues long: CD2 antigen cytoplasmic tail-binding protein 2 homolog (319 aa).

Disordered stretches follow at residues 1-57 (MASK…EDDV) and 105-124 (NAFDPAKDEENSSDEEKNEP). Over residues 12-24 (KVKEESFKKHTLD) the composition is skewed to basic and acidic residues. Phosphoserine occurs at positions 25 and 30. A compositionally biased stretch (acidic residues) spans 25-47 (SDEEDSDDYEREYLNDSDIEGGE). Tyr37 bears the Phosphotyrosine mark. Ser41 carries the phosphoserine modification. A compositionally biased stretch (basic and acidic residues) spans 109–124 (PAKDEENSSDEEKNEP). Residues 260-316 (EVTWEFKWSQDETDIQGPFSTEKMLKWSQENYFKNGVYVRKCGENTNFYTSNRIDFD) enclose the GYF domain.

The protein resides in the nucleus. Required for embryonic epithelial tissue repair, but not for the assembly of the actomyosin cable at the wound edge. Probably acts downstream of rl in the regulation of Ddc and msn transcription to promote wound healing. The sequence is that of CD2 antigen cytoplasmic tail-binding protein 2 homolog (holn1) from Drosophila melanogaster (Fruit fly).